A 92-amino-acid polypeptide reads, in one-letter code: UPF0235 protein PF1765 (92 aa).

The protein belongs to the UPF0235 family.

This Pyrococcus furiosus (strain ATCC 43587 / DSM 3638 / JCM 8422 / Vc1) protein is UPF0235 protein PF1765.